The sequence spans 168 residues: Large ribosomal subunit protein uL10 (168 aa).

The protein belongs to the universal ribosomal protein uL10 family. In terms of assembly, part of the ribosomal stalk of the 50S ribosomal subunit. The N-terminus interacts with L11 and the large rRNA to form the base of the stalk. The C-terminus forms an elongated spine to which L12 dimers bind in a sequential fashion forming a multimeric L10(L12)X complex.

Its function is as follows. Forms part of the ribosomal stalk, playing a central role in the interaction of the ribosome with GTP-bound translation factors. The sequence is that of Large ribosomal subunit protein uL10 from Laribacter hongkongensis (strain HLHK9).